The chain runs to 87 residues: UPF0367 protein P9211_01391 (87 aa).

Belongs to the UPF0367 family.

The polypeptide is UPF0367 protein P9211_01391 (Prochlorococcus marinus (strain MIT 9211)).